Here is a 506-residue protein sequence, read N- to C-terminus: RNA-splicing ligase RtcB homolog (506 aa).

Aspartate 120, cysteine 123, histidine 228, histidine 260, and histidine 354 together coordinate Mn(2+). Residue 227 to 231 (NHYAE) coordinates GMP. Residues 354-355 (HN), 403-406 (GGTM), serine 410, 429-432 (HGAG), and lysine 505 each bind GMP. Histidine 429 acts as the GMP-histidine intermediate in catalysis.

Belongs to the RtcB family. As to quaternary structure, catalytic component of the tRNA-splicing ligase complex. It depends on Mn(2+) as a cofactor.

It catalyses the reaction a 3'-end 3'-phospho-ribonucleotide-RNA + a 5'-end dephospho-ribonucleoside-RNA + GTP = a ribonucleotidyl-ribonucleotide-RNA + GMP + diphosphate. The enzyme catalyses a 3'-end 2',3'-cyclophospho-ribonucleotide-RNA + a 5'-end dephospho-ribonucleoside-RNA + GTP + H2O = a ribonucleotidyl-ribonucleotide-RNA + GMP + diphosphate + H(+). Functionally, catalytic subunit of the tRNA-splicing ligase complex that acts by directly joining spliced tRNA halves to mature-sized tRNAs by incorporating the precursor-derived splice junction phosphate into the mature tRNA as a canonical 3',5'-phosphodiester. May act as an RNA ligase with broad substrate specificity, and may function toward other RNAs. This is RNA-splicing ligase RtcB homolog from Drosophila melanogaster (Fruit fly).